Here is a 752-residue protein sequence, read N- to C-terminus: Exocyst complex component EXO84B (752 aa).

Disordered stretches follow at residues 511 to 532 and 724 to 752; these read QTGQ…NPEQ and TKGN…HGSY. Basic and acidic residues predominate over residues 515–532; the sequence is RTDDLRRPLDRQNRNPEQ. Residues 733-752 show a composition bias toward low complexity; it reads SPTASVSAQSVSSARSHGSY.

Belongs to the EXO84 family. In terms of assembly, the exocyst complex is composed of SEC3, SEC5, SEC6, SEC8, SEC10, EXO70A1 and EXO84B. Interacts with SEC6, SEC10, SEC15B and EXO70A1. Interacts with EXO70B1. Binds directly to B1L.

Its subcellular location is the cytoplasm. The protein localises to the cytosol. It localises to the perinuclear region. The protein resides in the cytoskeleton. It is found in the phragmoplast. Its subcellular location is the secreted. The protein localises to the cell wall. It localises to the cell membrane. In terms of biological role, component of the exocyst complex involved in the docking of exocytic vesicles with fusion sites on the plasma membrane during regulated or polarized secretion. Involved in polarized cell growth and organ morphogenesis. During cytokinesis, involved in cell plate initiation, cell plate maturation and formation of new primary cell wall. Probable component of an exocyst subcomplex specifically involved in autophagy-related, Golgi-independent membrane traffic to the vacuole. Regulates autophagosome formation and autophagy-related Golgi-independent import into the vacuole. Mediates ABCG36/PEN3 outer-membrane polarity at the periphery of lateral root cap and root epidermal cells. The polypeptide is Exocyst complex component EXO84B (Arabidopsis thaliana (Mouse-ear cress)).